A 240-amino-acid chain; its full sequence is Probable 2-phosphosulfolactate phosphatase (240 aa).

Belongs to the ComB family. Mg(2+) serves as cofactor.

The enzyme catalyses (2R)-O-phospho-3-sulfolactate + H2O = (2R)-3-sulfolactate + phosphate. In Clostridium kluyveri (strain NBRC 12016), this protein is Probable 2-phosphosulfolactate phosphatase.